Consider the following 437-residue polypeptide: U1 small nuclear ribonucleoprotein 70 kDa (437 aa).

An N-acetylthreonine modification is found at T2. Positions 48-79 (FEDPRDAPPPTRAETREERMERKRREKIERRQ) are disordered. The span at 60-79 (AETREERMERKRREKIERRQ) shows a compositional bias: basic and acidic residues. Residues 92 to 202 (HNDPNAQGDA…GGGLGGTRRG (111 aa)) form a required for interaction with U1 RNA region. Residues 103 to 181 (KTLFVARVNY…RRVLVDVERG (79 aa)) form the RRM domain. K118 carries the post-translational modification N6-acetyllysine. Residue Y126 is modified to Phosphotyrosine. A disordered region spans residues 187-437 (WRPRRLGGGL…NGYLMEAAPE (251 aa)). Positions 192 to 201 (LGGGLGGTRR) are enriched in gly residues. Residues 207–254 (NIRHSGRDDTSRYDERPGPSPLPHRDRDRDRERERRERSRERDKERER) are compositionally biased toward basic and acidic residues. A phosphoserine mark is found at S226 and S268. Residues 255-268 (RRSRSRDRRRRSRS) are compositionally biased toward basic residues. Composition is skewed to basic and acidic residues over residues 269–286 (RDKE…DKDR) and 294–310 (RSRE…EELR). S320 bears the Phosphoserine mark. The segment covering 343 to 393 (PEEKGRDRDRERRRSHRSERERRRDRDRDRDRDREHKRGERGSERGRDEAR) has biased composition (basic and acidic residues). K346 is covalently cross-linked (Glycyl lysine isopeptide (Lys-Gly) (interchain with G-Cter in SUMO2)). A Phosphoserine modification is found at S410.

As to quaternary structure, component of the U1 snRNP. The U1 snRNP is composed of the U1 snRNA and the 7 core Sm proteins SNRPB, SNRPD1, SNRPD2, SNRPD3, SNRPE, SNRPF and SNRPG that assemble in a heptameric protein ring on the Sm site of the small nuclear RNA to form the core snRNP, and at least three U1 snRNP-specific proteins SNRNP70/U1-70K, SNRPA/U1-A and SNRPC/U1-C. Interacts with SCNM1. Found in a pre-mRNA splicing complex with SFRS4, SFRS5, SNRNP70, SNRPA1, SRRM1 and SRRM2. Found in a pre-mRNA exonic splicing enhancer (ESE) complex with SNRNP70, SNRPA1, SRRM1 and TRA2B/SFRS10. Interacts with dephosphorylated SFRS13A and SFPQ. Interacts with NUDT21/CPSF5, CPSF6, SCAF11, and ZRANB2. Interacts with GEMIN5. Interacts with FUS. In terms of processing, the N-terminus is blocked. Extensively phosphorylated on serine residues in the C-terminal region.

It is found in the nucleus speckle. Its subcellular location is the nucleus. The protein localises to the nucleoplasm. In terms of biological role, component of the spliceosomal U1 snRNP, which is essential for recognition of the pre-mRNA 5' splice-site and the subsequent assembly of the spliceosome. SNRNP70 binds to the loop I region of U1-snRNA. Truncated isoforms that lack the RRM domain cannot bind U1-snRNA. The sequence is that of U1 small nuclear ribonucleoprotein 70 kDa (SNRNP70) from Homo sapiens (Human).